A 90-amino-acid chain; its full sequence is Small ribosomal subunit protein uS15 (90 aa).

The protein belongs to the universal ribosomal protein uS15 family. In terms of assembly, part of the 30S ribosomal subunit. Forms a bridge to the 50S subunit in the 70S ribosome, contacting the 23S rRNA.

Its function is as follows. One of the primary rRNA binding proteins, it binds directly to 16S rRNA where it helps nucleate assembly of the platform of the 30S subunit by binding and bridging several RNA helices of the 16S rRNA. Forms an intersubunit bridge (bridge B4) with the 23S rRNA of the 50S subunit in the ribosome. The chain is Small ribosomal subunit protein uS15 from Helicobacter hepaticus (strain ATCC 51449 / 3B1).